Consider the following 614-residue polypeptide: ATP-dependent rRNA helicase SPB4 (614 aa).

The Q motif motif lies at W10 to A38. The Helicase ATP-binding domain occupies I41–I233. Residue A54 to T61 coordinates ATP. The short motif at D181 to D184 is the DEAD box element. Residues K260–M431 form the Helicase C-terminal domain. The stretch at E510–S581 forms a coiled coil. The segment covering K514–A529 has biased composition (basic and acidic residues). Positions K514–L614 are disordered. Residues R530–L541 show a composition bias toward basic residues. 2 stretches are compositionally biased toward basic and acidic residues: residues K551–E563 and E584–K595. Polar residues predominate over residues S604–L614.

The protein belongs to the DEAD box helicase family. DDX55/SPB4 subfamily. In terms of assembly, component of pre-60S ribosomal complexes.

The protein localises to the nucleus. The protein resides in the nucleolus. The enzyme catalyses ATP + H2O = ADP + phosphate + H(+). Its function is as follows. ATP-binding RNA helicase involved in the biogenesis of 60S ribosomal subunits. Binds 90S pre-ribosomal particles and dissociates from pre-60S ribosomal particles after processing of 27SB pre-rRNA. Required for the normal formation of 18S rRNA through the processing of pre-rRNAs at sites A0, A1 and A2, and the normal formation of 25S and 5.8S rRNAs through the processing of pre-rRNAs at sites C1 and C2. The sequence is that of ATP-dependent rRNA helicase SPB4 from Debaryomyces hansenii (strain ATCC 36239 / CBS 767 / BCRC 21394 / JCM 1990 / NBRC 0083 / IGC 2968) (Yeast).